The sequence spans 186 residues: Dual-action ribosomal maturation protein DarP (186 aa).

This sequence belongs to the DarP family.

Its subcellular location is the cytoplasm. In terms of biological role, member of a network of 50S ribosomal subunit biogenesis factors which assembles along the 30S-50S interface, preventing incorrect 23S rRNA structures from forming. Promotes peptidyl transferase center (PTC) maturation. The chain is Dual-action ribosomal maturation protein DarP from Proteus mirabilis (strain HI4320).